We begin with the raw amino-acid sequence, 473 residues long: Lactate utilization protein B (473 aa).

4Fe-4S ferredoxin-type domains lie at 302-332 and 351-380; these read GSEF…GHSY and YDDY…LHDL. Positions 311, 314, 317, 321, 364, 367, and 371 each coordinate [4Fe-4S] cluster.

Belongs to the LutB/YkgF family.

Its function is as follows. Is involved in L-lactate degradation and allows cells to grow with lactate as the sole carbon source. Has probably a role as an electron transporter during oxidation of L-lactate. The polypeptide is Lactate utilization protein B (Bacillus cytotoxicus (strain DSM 22905 / CIP 110041 / 391-98 / NVH 391-98)).